Here is a 1257-residue protein sequence, read N- to C-terminus: MVFKPLTIAAAIAGLTPFVSAFDAQAKSNVAVYYGQGYGQQRLSHFCQETSLDIINIGFINTFPDQGAAGWPGSNFGNQCDGLTYEVDGVSTKLLSGCHQIAEDIPICQAAGKKVLLSLGGASPDNQQILSDASAVRFADFLWGAFGPQTEEWVSNDGPRPFGEVVVDGFDFDIEHNGGFGYATMVNRFRELFALVPERTFYISGAPQCPIPDPQLSDAIAQSPFDFVWVQFYNTAGCAASDSINGVSTGFNFDDWVDVIKRGANPDAKLYVGLPAGPGAAGAGYYLTPEEVYPLVDVYMNLYPETFGGIMLWEATASDENTFSGLTFADVIKDILVAVDPSPPVPSPSSSSVIASSTPVASSTPVASSAPASSTPISSGSPVPSSSAVSSSPAVSSTTESSSTQVVSGSVSASSSPITSSPVASSTPVASSAPSATSSAVASSSPIAPSSPVASSSAIASSSAIASSSAIASSSAIASSSAIASSSAIASSSAIASSSAIASSSAIASSSAIASSSAIASSSAIASSSAIASSSPVAPSSPVASSSPAVSSSAIVSSTPAVSTPVASSIPVISSPAIASGSAIASSSHVASSSTPAASSSPAVSSSPVASSSPALSSSPSASASSTPIIPSSTASSAVVSSSPTPSSSVVRSSSLLSSSSPALSSTRTPSNPVIPSSSAISITPSSTPVRSTSSVAPGKSSSAPVIPKPSSTVIATFTSSSGSLPSSSAPAGSGVPSSSTLPHPSSTSLLSSSPVSSAEPVSSSSAVGTSVGSSSNVVTGVSTRSSSSVVPSGTPIPPVSGTATESVTSSSSGSGSPTVPSSINTSSTDASSSSSASSVEPTSSGSVITSVTSSSASRVSSSSSSVVITNPSVPSDSSSSSGSELSTTSSTESTSSASSQTGAPTTSVSLGSSEAASTSTSGAAASGSGAQDSTKPTDHASTLSPSYSTPLASASGQTGSPTTVPAGIPTGNGSGLAPITSSITSAQAVPSVTSSGLESEPEPTITTTVIVTSYIDICPEGFTTITTTYTTTYCPATVSATATATAAVTNPPGAPAQTTSPSVPEGWTTTVTVCTHCAPTPTTVTLTLPATNRPSALASSTSAPNSPEDWTTTVSVCTDCGPTPTTVTVTIPVGAATGVDALTASPSGSQPAGESSPGQSAPTAPASTAPTTTETVIVVPSQSSTSQPVILGTGSVRASSTFHIQPSQSGSRVPVAPSGTAAGVSPVFTGAASRVSRLQHGAGAVSAFALFLLAAI.

Residues 1 to 21 form the signal peptide; sequence MVFKPLTIAAAIAGLTPFVSA. The GH18 domain maps to 28–339; that stretch reads SNVAVYYGQG…DVIKDILVAV (312 aa). The Proton donor role is filled by glutamate 175. Disordered stretches follow at residues 364 to 429, 595 to 980, and 1141 to 1174; these read TPVA…STPV, TPAA…LAPI, and DALTASPSGSQPAGESSPGQSAPTAPASTAPTTT. Positions 595-696 are enriched in low complexity; it reads TPAASSSPAV…STPVRSTSSV (102 aa). Over residues 700–715 the composition is skewed to polar residues; that stretch reads KSSSAPVIPKPSSTVI. Over residues 716 to 935 the composition is skewed to low complexity; that stretch reads ATFTSSSGSL…ASGSGAQDST (220 aa). The N-linked (GlcNAc...) asparagine glycan is linked to asparagine 825. Positions 940 to 964 are enriched in polar residues; sequence HASTLSPSYSTPLASASGQTGSPTT. Residue asparagine 973 is glycosylated (N-linked (GlcNAc...) asparagine). Positions 1145-1154 are enriched in polar residues; that stretch reads ASPSGSQPAG. Low complexity predominate over residues 1156-1174; that stretch reads SSPGQSAPTAPASTAPTTT. A lipid anchor (GPI-anchor amidated glycine) is attached at glycine 1231. Residues 1232 to 1257 constitute a propeptide, removed in mature form; sequence AASRVSRLQHGAGAVSAFALFLLAAI.

The protein belongs to the glycosyl hydrolase 18 family. Chitinase class III subfamily. O-glycosylated.

It localises to the cell membrane. Its subcellular location is the secreted. It is found in the cell wall. It carries out the reaction Random endo-hydrolysis of N-acetyl-beta-D-glucosaminide (1-&gt;4)-beta-linkages in chitin and chitodextrins.. Functionally, GPI-anchored chitinase involved in the degradation of chitin, a component of the cell walls of fungi and exoskeletal elements of some animals (including worms and arthropods). Required to reshape the cell wall at the sites where cell wall remodeling and/or cell wall maturation actively take place such as sites of conidia formation. This Aspergillus niger (strain ATCC MYA-4892 / CBS 513.88 / FGSC A1513) protein is Endochitinase A (ctcA).